Reading from the N-terminus, the 280-residue chain is Protein YibA (280 aa).

The sequence is that of Protein YibA (yibA) from Escherichia coli O157:H7.